The sequence spans 206 residues: Glycerol-3-phosphate acyltransferase (206 aa).

Helical transmembrane passes span 4 to 24 (IIGILILGYLLGSIPFALLVG), 55 to 75 (IIVLIGDLGKGAVASLVPILL), 78 to 98 (ELHPLFAGLAAVVGHIYPVFA), 112 to 132 (MLLVTSPILFLVLLISFLTTL), 137 to 157 (MVSLSSIVSASIGIVAAITIG), and 158 to 178 (IVEQDWIVPTFFTILALFVIF).

The protein belongs to the PlsY family. Probably interacts with PlsX.

The protein resides in the cell membrane. The enzyme catalyses an acyl phosphate + sn-glycerol 3-phosphate = a 1-acyl-sn-glycero-3-phosphate + phosphate. It participates in lipid metabolism; phospholipid metabolism. Functionally, catalyzes the transfer of an acyl group from acyl-phosphate (acyl-PO(4)) to glycerol-3-phosphate (G3P) to form lysophosphatidic acid (LPA). This enzyme utilizes acyl-phosphate as fatty acyl donor, but not acyl-CoA or acyl-ACP. In Exiguobacterium sibiricum (strain DSM 17290 / CCUG 55495 / CIP 109462 / JCM 13490 / 255-15), this protein is Glycerol-3-phosphate acyltransferase.